Here is a 283-residue protein sequence, read N- to C-terminus: Formamidopyrimidine-DNA glycosylase (283 aa).

Catalysis depends on proline 2, which acts as the Schiff-base intermediate with DNA. Glutamate 3 acts as the Proton donor in catalysis. The active-site Proton donor; for beta-elimination activity is lysine 58. 3 residues coordinate DNA: histidine 100, arginine 119, and arginine 162. The segment at 247–283 (DVYGREGAPCKGEGCTGQIKRIVQSGRSSFYCAQCQR) adopts an FPG-type zinc-finger fold. Arginine 273 serves as the catalytic Proton donor; for delta-elimination activity.

It belongs to the FPG family. As to quaternary structure, monomer. The cofactor is Zn(2+).

The catalysed reaction is Hydrolysis of DNA containing ring-opened 7-methylguanine residues, releasing 2,6-diamino-4-hydroxy-5-(N-methyl)formamidopyrimidine.. It carries out the reaction 2'-deoxyribonucleotide-(2'-deoxyribose 5'-phosphate)-2'-deoxyribonucleotide-DNA = a 3'-end 2'-deoxyribonucleotide-(2,3-dehydro-2,3-deoxyribose 5'-phosphate)-DNA + a 5'-end 5'-phospho-2'-deoxyribonucleoside-DNA + H(+). Involved in base excision repair of DNA damaged by oxidation or by mutagenic agents. Acts as a DNA glycosylase that recognizes and removes damaged bases. Has a preference for oxidized purines, such as 7,8-dihydro-8-oxoguanine (8-oxoG). Has AP (apurinic/apyrimidinic) lyase activity and introduces nicks in the DNA strand. Cleaves the DNA backbone by beta-delta elimination to generate a single-strand break at the site of the removed base with both 3'- and 5'-phosphates. The protein is Formamidopyrimidine-DNA glycosylase of Roseobacter denitrificans (strain ATCC 33942 / OCh 114) (Erythrobacter sp. (strain OCh 114)).